A 122-amino-acid chain; its full sequence is UPF0102 protein CLL_A1253 (122 aa).

The protein belongs to the UPF0102 family.

This chain is UPF0102 protein CLL_A1253, found in Clostridium botulinum (strain Eklund 17B / Type B).